The chain runs to 495 residues: Tubulin epsilon and delta complex protein 1 (495 aa).

Residues 355-387 (GGELDLVVRELQALEEELREAAERRRAAWEAKA) are a coiled coil. The tract at residues 417-440 (CWERDGGPAQPHGPHRLVRREDGA) is disordered. The stretch at 452-480 (IRTLRSQEACLEAVLRRLQGQCRQELARL) forms a coiled coil.

Interacts with TEDC2. Found in a complex with TEDC1, TEDC2, TUBE1 and TUBD1.

The protein resides in the cell projection. It is found in the cilium. The protein localises to the cytoplasm. Its subcellular location is the cytoskeleton. It localises to the microtubule organizing center. The protein resides in the centrosome. It is found in the centriole. Its function is as follows. Acts as a positive regulator of ciliary hedgehog signaling. Required for centriole stability. May play a role in counteracting perturbation of actin filaments, such as after treatment with the actin depolymerizing microbial metabolite Chivosazole F. This chain is Tubulin epsilon and delta complex protein 1, found in Homo sapiens (Human).